The primary structure comprises 117 residues: DNA polymerase epsilon subunit 4 (117 aa).

The disordered stretch occupies residues M1–A36. An N-acetylalanine modification is found at A2. At T11 the chain carries Phosphothreonine. The segment covering A19–P30 has biased composition (low complexity). Phosphoserine is present on S25.

As to quaternary structure, component of the DNA polymerase epsilon complex consisting of four subunits: the catalytic subunit POLE and the accessory subunits POLE2, POLE3 and POLE4. Interaction with POLE3 is a prerequisite for further binding with POLE and POLE2.

The protein resides in the nucleus. Accessory component of the DNA polymerase epsilon complex. Participates in DNA repair and in chromosomal DNA replication. This is DNA polymerase epsilon subunit 4 (POLE4) from Homo sapiens (Human).